Reading from the N-terminus, the 463-residue chain is ATP synthase subunit beta (463 aa).

Residue 152-159 coordinates ATP; the sequence is GGAGVGKT.

It belongs to the ATPase alpha/beta chains family. In terms of assembly, F-type ATPases have 2 components, CF(1) - the catalytic core - and CF(0) - the membrane proton channel. CF(1) has five subunits: alpha(3), beta(3), gamma(1), delta(1), epsilon(1). CF(0) has three main subunits: a(1), b(2) and c(9-12). The alpha and beta chains form an alternating ring which encloses part of the gamma chain. CF(1) is attached to CF(0) by a central stalk formed by the gamma and epsilon chains, while a peripheral stalk is formed by the delta and b chains.

It localises to the cell inner membrane. It catalyses the reaction ATP + H2O + 4 H(+)(in) = ADP + phosphate + 5 H(+)(out). In terms of biological role, produces ATP from ADP in the presence of a proton gradient across the membrane. The catalytic sites are hosted primarily by the beta subunits. The protein is ATP synthase subunit beta of Shewanella denitrificans (strain OS217 / ATCC BAA-1090 / DSM 15013).